Here is a 508-residue protein sequence, read N- to C-terminus: Prenylcysteine oxidase 1 (508 aa).

An N-terminal signal peptide occupies residues 1–31 (MDPAAPGLACSILRLGLGLLLLCSWWYPGSA). 3 N-linked (GlcNAc...) asparagine glycosylation sites follow: N199, N291, and N356.

The protein belongs to the prenylcysteine oxidase family. It depends on FAD as a cofactor.

It localises to the lysosome. The enzyme catalyses an S-polyprenyl-L-cysteine + O2 + H2O = a polyprenal + L-cysteine + H2O2. The catalysed reaction is S-(2E,6E)-farnesyl-L-cysteine + O2 + H2O = (2E,6E)-farnesal + L-cysteine + H2O2. It catalyses the reaction [(2E,6E,10E)-geranylgeranyl]-L-cysteine + O2 + H2O = (2E,6E,10E)-geranylgeranial + L-cysteine + H2O2. Prenylcysteine oxidase that cleaves the thioether bond of prenyl-L-cysteines, such as farnesylcysteine and geranylgeranylcysteine. Only active against free prenylcysteines and not prenylcysteine residues within prenylated proteins or peptides. Involved in the final step in the degradation of prenylated proteins, by degrading prenylcysteines after the protein has been degraded. The sequence is that of Prenylcysteine oxidase 1 from Bos taurus (Bovine).